The chain runs to 121 residues: uncharacterized protein (121 aa).

Helical transmembrane passes span 2–22 (VFVTIIIIINISYNIYNIYTI), 42–62 (FICIYVCISGGNMPLWAYILF), and 89–109 (IFFAFCCHHIWSLLPHHLSIF).

The protein resides in the membrane. This is an uncharacterized protein from Saccharomyces cerevisiae (strain ATCC 204508 / S288c) (Baker's yeast).